A 516-amino-acid polypeptide reads, in one-letter code: MNLISKKNELKQGFYPLFFLEEFYTRVLIHMNHNHILKIGNIKESKLIHVNRICHYLLIKRLIRQIRKQSHKYNGISEFPNYETEFYFQYKNRFYNLIIENAFLLILQMIWQHQKTRKNDPSILIHRSIQSAFPFLEKKIIHCIWIIHGKIQLFHTIEQFNFLFLLLYERIRDKSFLHLLKNILNLNKEFLIEKFYCEKFHLIELSMFFRNLYINEFDSFIVYHIVKTWKLAYLLNPIKAIDDFSFIQKNDILLNIKRKQKRLPLVCWLANKSFYSLYGNIHYVRRDLSFLMAIQAGKHISRFWKYNCIKFLQLKLGFPCSLDVLYLKSLFNQDFLFLGYRIVNKLWKKNFKIRAVSWYSPILFFLKGRRISTKMPVFNLIDRLSVMHLCNLEGYPIHKAAWSVFNDKQIMNIFSNLLRNILFYYSGCSNRSDLGKIQYILEFSCMKTLAFKHKSSIRSTWTQYKKHVSFLSLVKNRHKNGKTSVDLYFLFQKTNKFWLLDLSKIQDSLACFILMD.

Belongs to the intron maturase 2 family. MatK subfamily.

The protein resides in the plastid. It localises to the chloroplast. Usually encoded in the trnK tRNA gene intron. Probably assists in splicing its own and other chloroplast group II introns. The chain is Maturase K from Chara vulgaris (Common stonewort).